The chain runs to 197 residues: Holliday junction branch migration complex subunit RuvA (197 aa).

Positions 1–63 are domain I; that stretch reads MYAYLKGIIT…EDAHLLYGFR (63 aa). The tract at residues 64-142 is domain II; the sequence is SEDEKKLFLS…VAGDDLPAKV (79 aa). The interval 143–147 is flexible linker; that stretch reads AVQAS. The interval 148 to 197 is domain III; that stretch reads AENQELEEAMEAMLALGYKATELKKIKKFFEGTTDTAENYIKSALKMLVK.

It belongs to the RuvA family. As to quaternary structure, homotetramer. Forms an RuvA(8)-RuvB(12)-Holliday junction (HJ) complex. HJ DNA is sandwiched between 2 RuvA tetramers; dsDNA enters through RuvA and exits via RuvB. An RuvB hexamer assembles on each DNA strand where it exits the tetramer. Each RuvB hexamer is contacted by two RuvA subunits (via domain III) on 2 adjacent RuvB subunits; this complex drives branch migration. In the full resolvosome a probable DNA-RuvA(4)-RuvB(12)-RuvC(2) complex forms which resolves the HJ.

It is found in the cytoplasm. Its function is as follows. The RuvA-RuvB-RuvC complex processes Holliday junction (HJ) DNA during genetic recombination and DNA repair, while the RuvA-RuvB complex plays an important role in the rescue of blocked DNA replication forks via replication fork reversal (RFR). RuvA specifically binds to HJ cruciform DNA, conferring on it an open structure. The RuvB hexamer acts as an ATP-dependent pump, pulling dsDNA into and through the RuvAB complex. HJ branch migration allows RuvC to scan DNA until it finds its consensus sequence, where it cleaves and resolves the cruciform DNA. This chain is Holliday junction branch migration complex subunit RuvA, found in Streptococcus pneumoniae (strain Hungary19A-6).